A 213-amino-acid chain; its full sequence is MTFPSLSVSFLFFAFIFVTHAFDLSIIQMQQGTCPYTVVVMTSCLSPESTRDQISIVFGDADGNKVYAPKLGGLVRGPGGLGKCSTNTFQVRGQCLNDPICSLYINRNGPDGWVPESIEIYSEGSKSVKFDFSKSVPQLNTWYGHNNCNTTGRPSSPDLPPPHFPPEFPPETPTTPPPPPPRPSAASRLGNGESVFLAFAIATAIAAMVRWSY.

Residues 1–21 (MTFPSLSVSFLFFAFIFVTHA) form the signal peptide. The PLAT domain occupies 34-148 (CPYTVVVMTS…LNTWYGHNNC (115 aa)). The interval 147 to 188 (NCNTTGRPSSPDLPPPHFPPEFPPETPTTPPPPPPRPSAASR) is disordered. The N-linked (GlcNAc...) asparagine glycan is linked to Asn-149. A compositionally biased stretch (pro residues) spans 157–183 (PDLPPPHFPPEFPPETPTTPPPPPPRP).

In terms of tissue distribution, expressed in seeds. Expression is restricted to the developing embryo.

The protein resides in the secreted. Functionally, may play a role during embryo development. The protein is Embryo-specific protein ATS3 of Arabidopsis thaliana (Mouse-ear cress).